The sequence spans 201 residues: Putative 3-methyladenine DNA glycosylase (201 aa).

The protein belongs to the DNA glycosylase MPG family.

This Trichodesmium erythraeum (strain IMS101) protein is Putative 3-methyladenine DNA glycosylase.